Consider the following 126-residue polypeptide: Aspartate 1-decarboxylase (126 aa).

The active-site Schiff-base intermediate with substrate; via pyruvic acid is S25. Pyruvic acid (Ser) is present on S25. Residue T57 coordinates substrate. Catalysis depends on Y58, which acts as the Proton donor. G73–A75 provides a ligand contact to substrate.

This sequence belongs to the PanD family. As to quaternary structure, heterooctamer of four alpha and four beta subunits. Pyruvate serves as cofactor. In terms of processing, is synthesized initially as an inactive proenzyme, which is activated by self-cleavage at a specific serine bond to produce a beta-subunit with a hydroxyl group at its C-terminus and an alpha-subunit with a pyruvoyl group at its N-terminus.

The protein localises to the cytoplasm. It carries out the reaction L-aspartate + H(+) = beta-alanine + CO2. It functions in the pathway cofactor biosynthesis; (R)-pantothenate biosynthesis; beta-alanine from L-aspartate: step 1/1. Its function is as follows. Catalyzes the pyruvoyl-dependent decarboxylation of aspartate to produce beta-alanine. This Xanthomonas oryzae pv. oryzae (strain MAFF 311018) protein is Aspartate 1-decarboxylase.